A 236-amino-acid chain; its full sequence is Adenosine 5'-phosphosulfate reductase 2 (236 aa).

[4Fe-4S] cluster contacts are provided by Cys-122, Cys-123, Cys-205, and Cys-208. The segment at 216–236 (NDERAGRWAGREKTECGLHQE) is disordered. Cys-231 serves as the catalytic Nucleophile; cysteine thiosulfonate intermediate.

It belongs to the PAPS reductase family. CysH subfamily. [4Fe-4S] cluster is required as a cofactor.

The protein resides in the cytoplasm. The catalysed reaction is [thioredoxin]-disulfide + sulfite + AMP + 2 H(+) = adenosine 5'-phosphosulfate + [thioredoxin]-dithiol. The protein operates within sulfur metabolism; hydrogen sulfide biosynthesis; sulfite from sulfate. In terms of biological role, catalyzes the formation of sulfite from adenosine 5'-phosphosulfate (APS) using thioredoxin as an electron donor. The polypeptide is Adenosine 5'-phosphosulfate reductase 2 (Bacillus subtilis (strain 168)).